We begin with the raw amino-acid sequence, 197 residues long: Probable GTP-binding protein EngB (197 aa).

An EngB-type G domain is found at 22-195 (NLPEIAFVGR…VDYLFDDLVE (174 aa)). GTP is bound by residues 30-37 (GRSNVGKS), 57-61 (GKTRL), 75-78 (DLPG), 142-145 (TKSD), and 174-176 (FSS). Positions 37 and 59 each coordinate Mg(2+).

The protein belongs to the TRAFAC class TrmE-Era-EngA-EngB-Septin-like GTPase superfamily. EngB GTPase family. The cofactor is Mg(2+).

Its function is as follows. Necessary for normal cell division and for the maintenance of normal septation. This chain is Probable GTP-binding protein EngB, found in Clostridium perfringens (strain 13 / Type A).